We begin with the raw amino-acid sequence, 107 residues long: Phosphoribosyl-ATP pyrophosphatase (107 aa).

This sequence belongs to the PRA-PH family.

It localises to the cytoplasm. The enzyme catalyses 1-(5-phospho-beta-D-ribosyl)-ATP + H2O = 1-(5-phospho-beta-D-ribosyl)-5'-AMP + diphosphate + H(+). It participates in amino-acid biosynthesis; L-histidine biosynthesis; L-histidine from 5-phospho-alpha-D-ribose 1-diphosphate: step 2/9. The sequence is that of Phosphoribosyl-ATP pyrophosphatase from Neisseria gonorrhoeae (strain ATCC 700825 / FA 1090).